Here is a 776-residue protein sequence, read N- to C-terminus: Probable E3 ubiquitin-protein ligase HECTD2 (776 aa).

Residues 1–46 form a disordered region; it reads MSEAVRVPSPATPLVVAAAAPEERKGKESEREKLPPIVSAGAGATA. Positions 7–20 are enriched in low complexity; the sequence is VPSPATPLVVAAAA. Position 9 is a phosphoserine (Ser9). The span at 21–34 shows a compositional bias: basic and acidic residues; it reads PEERKGKESEREKL. An HECT domain is found at 437–776; it reads KRADLKKKLK…ISNSEGFGLE (340 aa). Cys744 (glycyl thioester intermediate) is an active-site residue.

It carries out the reaction S-ubiquitinyl-[E2 ubiquitin-conjugating enzyme]-L-cysteine + [acceptor protein]-L-lysine = [E2 ubiquitin-conjugating enzyme]-L-cysteine + N(6)-ubiquitinyl-[acceptor protein]-L-lysine.. It participates in protein modification; protein ubiquitination. E3 ubiquitin-protein ligase which accepts ubiquitin from an E2 ubiquitin-conjugating enzyme in the form of a thioester and then directly transfers the ubiquitin to targeted substrates. The sequence is that of Probable E3 ubiquitin-protein ligase HECTD2 (HECTD2) from Pongo abelii (Sumatran orangutan).